A 258-amino-acid polypeptide reads, in one-letter code: Eukaryotic translation initiation factor 3 subunit J (258 aa).

Residues 1–11 (MAAAAAAAGDS) are compositionally biased toward low complexity. The segment at 1–108 (MAAAAAAAGD…LEEPEEPKVL (108 aa)) is disordered. Ala2 bears the N-acetylalanine mark. Residues 2–69 (AAAAAAAGDS…KEEAEVKPEV (68 aa)) are sufficient for interaction with EIF3B. Residues Ser11, Ser13, and Ser20 each carry the phosphoserine modification. Over residues 40–59 (EGEDEDEDVKDNWDDDDDEK) the composition is skewed to acidic residues. The segment covering 60 to 106 (KEEAEVKPEVKISEKKKIAEKIKEKERQQKKRQEEIKKRLEEPEEPK) has biased composition (basic and acidic residues). Residues 70 to 135 (KISEKKKIAE…ESDLELAKET (66 aa)) adopt a coiled-coil conformation. A Glycyl lysine isopeptide (Lys-Gly) (interchain with G-Cter in SUMO2) cross-link involves residue Lys106. Position 109 is a phosphothreonine (Thr109). Ser127 bears the Phosphoserine mark. The interval 217 to 238 (SKAKKKKKGVVPGGGLKATMKD) is disordered. The interval 243–258 (YGGYDGGYVQDYEDFM) is promotes stable association with the 40S ribosome. Tyr254 carries the post-translational modification Phosphotyrosine.

As to quaternary structure, component of the eukaryotic translation initiation factor 3 (eIF-3) complex, which is composed of 13 subunits: EIF3A, EIF3B, EIF3C, EIF3D, EIF3E, EIF3F, EIF3G, EIF3H, EIF3I, EIF3J, EIF3K, EIF3L and EIF3M. The eIF-3 complex appears to include 3 stable modules: module A is composed of EIF3A, EIF3B, EIF3G and EIF3I; module B is composed of EIF3F, EIF3H, and EIF3M; and module C is composed of EIF3C, EIF3D, EIF3E, EIF3K and EIF3L. EIF3C of module C binds EIF3B of module A and EIF3H of module B, thereby linking the three modules. EIF3J is a labile subunit that binds to the eIF-3 complex via EIF3B. The eIF-3 complex interacts with RPS6KB1 under conditions of nutrient depletion. Mitogenic stimulation leads to binding and activation of a complex composed of MTOR and RPTOR, leading to phosphorylation and release of RPS6KB1 and binding of EIF4B to eIF-3. In terms of processing, phosphorylated. Phosphorylation is enhanced upon serum stimulation.

The protein localises to the cytoplasm. Component of the eukaryotic translation initiation factor 3 (eIF-3) complex, which is required for several steps in the initiation of protein synthesis. The eIF-3 complex associates with the 40S ribosome and facilitates the recruitment of eIF-1, eIF-1A, eIF-2:GTP:methionyl-tRNAi and eIF-5 to form the 43S pre-initiation complex (43S PIC). The eIF-3 complex stimulates mRNA recruitment to the 43S PIC and scanning of the mRNA for AUG recognition. The eIF-3 complex is also required for disassembly and recycling of post-termination ribosomal complexes and subsequently prevents premature joining of the 40S and 60S ribosomal subunits prior to initiation. The eIF-3 complex specifically targets and initiates translation of a subset of mRNAs involved in cell proliferation, including cell cycling, differentiation and apoptosis, and uses different modes of RNA stem-loop binding to exert either translational activation or repression. This chain is Eukaryotic translation initiation factor 3 subunit J, found in Homo sapiens (Human).